Consider the following 359-residue polypeptide: Olfactory receptor 8S1 (359 aa).

The Extracellular segment spans residues 1-25 (MALGNHSTITEFLLLGLSADPNIRA). Asn-5 is a glycosylation site (N-linked (GlcNAc...) asparagine). The helical transmembrane segment at 26–46 (LLFVLFLGIYLLTIMENLMLL) threads the bilayer. Residues 47–54 (LMIRADSC) lie on the Cytoplasmic side of the membrane. A helical transmembrane segment spans residues 55-75 (LHKPMYFFLSHLSFVDLCFSS). Residues 76 to 99 (VIVPKMLENLLSQRKTISVEGCLA) lie on the Extracellular side of the membrane. A disulfide bridge connects residues Cys-97 and Cys-189. Residues 100–120 (QVFFVFVTAGTEACLLSGMAY) form a helical membrane-spanning segment. Over 121-139 (DRHAAICRPLLYGQIMGKQ) the chain is Cytoplasmic. The helical transmembrane segment at 140–160 (LYMHLVWGSWGLGFLDALINV) threads the bilayer. Over 161–197 (LLAVNMVFCEAKIIHHYSYEMPSLLPLSCSDISRSLI) the chain is Extracellular. The helical transmembrane segment at 198–217 (ALLCSTLLHGLGNFLLVFLS) threads the bilayer. The Cytoplasmic portion of the chain corresponds to 218–237 (YTRIISTILSISSTSGRSKA). Residues 238-258 (FSTCSAHLTAVTLYYGSGLLR) traverse the membrane as a helical segment. The Extracellular segment spans residues 259–269 (HLMPNSGSPIE). The helical transmembrane segment at 270-290 (LIFSVQYTVVTPMLNSLIYSL) threads the bilayer. Over 291–359 (KNKEVKGERS…ALRAAPTALP (69 aa)) the chain is Cytoplasmic. Positions 301–338 (LRDSSHLPQLHKGQARWKRPAFTEGRREPGHPELSIPV) are disordered.

This sequence belongs to the G-protein coupled receptor 1 family.

It is found in the cell membrane. Functionally, odorant receptor. In Homo sapiens (Human), this protein is Olfactory receptor 8S1 (OR8S1).